The sequence spans 307 residues: Ubiquitin recognition factor in ER-associated degradation protein 1 (307 aa).

Residue methionine 1 is modified to N-acetylmethionine. Phosphoserine is present on residues serine 129, serine 231, serine 245, serine 247, and serine 299. Disordered stretches follow at residues 230-255 (GSGN…GDIK) and 288-307 (GRFI…GRKP).

The protein belongs to the UFD1 family. Heterodimer with NPLOC4, this heterodimer binds VCP and inhibits Golgi membrane fusion. Interacts with USP13. Interacts with ZFAND2B; probably through VCP.

It is found in the nucleus. The protein resides in the cytoplasm. It localises to the cytosol. Its pathway is protein degradation; proteasomal ubiquitin-dependent pathway. Essential component of the ubiquitin-dependent proteolytic pathway which degrades ubiquitin fusion proteins. The ternary complex containing UFD1, VCP and NPLOC4 binds ubiquitinated proteins and is necessary for the export of misfolded proteins from the ER to the cytoplasm, where they are degraded by the proteasome. The NPLOC4-UFD1-VCP complex regulates spindle disassembly at the end of mitosis and is necessary for the formation of a closed nuclear envelope. It may be involved in the development of some ectoderm-derived structures. Acts as a negative regulator of type I interferon production via the complex formed with VCP and NPLOC4, which binds to RIGI and recruits RNF125 to promote ubiquitination and degradation of RIGI. This Mus musculus (Mouse) protein is Ubiquitin recognition factor in ER-associated degradation protein 1.